Consider the following 417-residue polypeptide: Serine hydroxymethyltransferase (417 aa).

(6S)-5,6,7,8-tetrahydrofolate-binding positions include Leu-121 and 125–127; that span reads GHL. Lys-230 is modified (N6-(pyridoxal phosphate)lysine). (6S)-5,6,7,8-tetrahydrofolate is bound at residue 355 to 357; sequence SPF.

The protein belongs to the SHMT family. Homodimer. The cofactor is pyridoxal 5'-phosphate.

It localises to the cytoplasm. It catalyses the reaction (6R)-5,10-methylene-5,6,7,8-tetrahydrofolate + glycine + H2O = (6S)-5,6,7,8-tetrahydrofolate + L-serine. Its pathway is one-carbon metabolism; tetrahydrofolate interconversion. The protein operates within amino-acid biosynthesis; glycine biosynthesis; glycine from L-serine: step 1/1. Its function is as follows. Catalyzes the reversible interconversion of serine and glycine with tetrahydrofolate (THF) serving as the one-carbon carrier. This reaction serves as the major source of one-carbon groups required for the biosynthesis of purines, thymidylate, methionine, and other important biomolecules. Also exhibits THF-independent aldolase activity toward beta-hydroxyamino acids, producing glycine and aldehydes, via a retro-aldol mechanism. In Ruthia magnifica subsp. Calyptogena magnifica, this protein is Serine hydroxymethyltransferase.